A 116-amino-acid chain; its full sequence is Large ribosomal subunit protein uL18 (116 aa).

This sequence belongs to the universal ribosomal protein uL18 family. In terms of assembly, part of the 50S ribosomal subunit; part of the 5S rRNA/L5/L18/L25 subcomplex. Contacts the 5S and 23S rRNAs.

In terms of biological role, this is one of the proteins that bind and probably mediate the attachment of the 5S RNA into the large ribosomal subunit, where it forms part of the central protuberance. In Acholeplasma laidlawii (strain PG-8A), this protein is Large ribosomal subunit protein uL18.